We begin with the raw amino-acid sequence, 228 residues long: Calcyclin-binding protein (228 aa).

An N-acetylmethionine modification is found at M1. An N-acetylalanine modification is found at A2. The segment at 2-80 (ASEELQKDLE…YTVKISNYGW (79 aa)) is interaction with SIAH1. At S3 the chain carries Phosphoserine. Residues K8 and K19 each carry the N6-acetyllysine modification. Residue S34 is modified to Phosphoserine. A CS domain is found at 73-167 (VKISNYGWDQ…VENTRWDYLT (95 aa)). The interaction with SKP1 stretch occupies residues 73-228 (VKISNYGWDQ…EKQAKGDTEF (156 aa)). N6-acetyllysine occurs at positions 85 and 118. Residues 154 to 228 (CRKKVENTRW…EKQAKGDTEF (75 aa)) are interaction with S100A6. An SGS domain is found at 168–228 (QVEKECKEKE…EKQAKGDTEF (61 aa)).

Homodimer. Interacts with proteins of the S100 family S100A1, S100A6, S100B, S100P and S100A12 in a calcium-dependent manner. Component of some large E3 complex at least composed of UBE2D1, SIAH1, CACYBP/SIP, SKP1, APC and TBL1X. Interacts directly with SIAH1, SIAH2 and SKP1. Post-translationally, phosphorylated on serine residues. Phosphorylated upon induction by RA or at high calcium concentrations.

It localises to the nucleus. Its subcellular location is the cytoplasm. Its function is as follows. May be involved in calcium-dependent ubiquitination and subsequent proteasomal degradation of target proteins. Probably serves as a molecular bridge in ubiquitin E3 complexes. Participates in the ubiquitin-mediated degradation of beta-catenin (CTNNB1). In Homo sapiens (Human), this protein is Calcyclin-binding protein (CACYBP).